A 394-amino-acid chain; its full sequence is MEVPPPLVLKRPLYVPSKTLMGPGPSNCSHRVLEAMSNPVLGHMHPECLQIMDEVKEGIKYIFQTLNDATMCISGAGHSGMEAALCNLIEDGDVVLMGITGVWGHRAGDMARRYGAEVHYVEASFGRALSHEEITFAFEAHRPKVFFIAQGDSSTGIIQQNIRELGELCRKYDCFLIVDTVASLGGTEFLMDEWKVDVAYTGSQKSLGGPAGLTPISFSKRALTRIRKRKTKPKVYYFDILLIGQYWGCYGTPRIYHHTISSTLLYGLREALAHFCAVGLKAVVRRHQECSKRLQLGIEELGLEMFVSREEERLPTVNTIKVPFGVDWKKVAEYAMRKYSVEISGGLGPTVEHVFRIGLMGENATVERVDMVLSILNEAIQSSKLGIKTDLSKI.

Pyridoxal 5'-phosphate-binding positions include 76–78, Ser153, and Gln204; that span reads AGH. Ser153 contacts substrate. Residue Lys205 is modified to N6-(pyridoxal phosphate)lysine. Positions 256 and 259 each coordinate pyridoxal 5'-phosphate. Arg356 serves as a coordination point for substrate.

This sequence belongs to the class-V pyridoxal-phosphate-dependent aminotransferase family. Homodimer. Pyridoxal 5'-phosphate serves as cofactor.

The protein localises to the peroxisome. It carries out the reaction glyoxylate + L-alanine = glycine + pyruvate. The enzyme catalyses (2S)-2-aminobutanoate + glyoxylate = 2-oxobutanoate + glycine. The catalysed reaction is glyoxylate + L-phenylalanine = 3-phenylpyruvate + glycine. It catalyses the reaction glyoxylate + L-serine = 3-hydroxypyruvate + glycine. It carries out the reaction 2-oxobutanoate + L-alanine = (2S)-2-aminobutanoate + pyruvate. The enzyme catalyses L-phenylalanine + pyruvate = 3-phenylpyruvate + L-alanine. The catalysed reaction is L-serine + pyruvate = 3-hydroxypyruvate + L-alanine. Functionally, catalyzes the pyridoxal 5'-phosphate-dependent transamination of alanine with glyoxylate as an amino group acceptor. Can also catalyze, although with much less efficiency, the transamination of amino-butyrate, phenylalanine and serine with glyoxylate or pyruvate as an amino group acceptor. Does not catalyze the transamination of both 3-hydroxykynurenine and L-kynurenine. May play a role in the detoxification of glyoxylate, a toxic plant metabolite from the fly diet. This is Alanine--glyoxylate aminotransferase from Drosophila melanogaster (Fruit fly).